Reading from the N-terminus, the 235-residue chain is tRNA (guanine-N(1)-)-methyltransferase (235 aa).

S-adenosyl-L-methionine-binding positions include Gly-114 and 134–139 (IGDYIL).

Belongs to the RNA methyltransferase TrmD family. As to quaternary structure, homodimer.

The protein localises to the cytoplasm. It carries out the reaction guanosine(37) in tRNA + S-adenosyl-L-methionine = N(1)-methylguanosine(37) in tRNA + S-adenosyl-L-homocysteine + H(+). Functionally, specifically methylates guanosine-37 in various tRNAs. This Ehrlichia canis (strain Jake) protein is tRNA (guanine-N(1)-)-methyltransferase.